The primary structure comprises 396 residues: DNA polymerase interacting tetratricopeptide repeat-containing, protein of 47 kDa (396 aa).

3 TPR repeats span residues alanine 91–asparagine 124, alanine 129–tyrosine 162, and threonine 163–asparagine 196.

The protein belongs to the TTC4 family. In terms of assembly, forms a complex with Hsp83 and Hsp70aa. Interacts with DNApol-alpha180; the interaction inhibits the activity of the DNA polymerase and occurs only in proliferating cells but not in quiescent cells. As to expression, more abundant in young embryos, pupae and females and a lower level expression seen in late embryos, larvae and males.

The protein localises to the nucleus. The protein resides in the nucleoplasm. It is found in the cytoplasm. Its function is as follows. May act as a co-chaperone for HSP83. The polypeptide is DNA polymerase interacting tetratricopeptide repeat-containing, protein of 47 kDa (Dpit47) (Drosophila melanogaster (Fruit fly)).